We begin with the raw amino-acid sequence, 658 residues long: Carnitine O-palmitoyltransferase 2, mitochondrial (658 aa).

A mitochondrion-targeting transit peptide spans 1–25 (MMPRLLLRDWPRCPSLVLGAPSRPL). At 26–178 (SAVSGPAEYL…GLLEPEVFHL (153 aa)) the chain is on the mitochondrial matrix side. Residue Lys69 is modified to N6-succinyllysine. Lys79 bears the N6-acetyllysine mark. An N6-succinyllysine modification is found at Lys85. The segment at residues 179-208 (NPARSDTDAFKRLIRFVPSSLSWYGAYLVN) is an intramembrane region (note=Mitochondrial inner membrane). Topologically, residues 209-658 (AYPLDMSQYF…DALEGKAIKT (450 aa)) are mitochondrial matrix. Residue Lys239 is modified to N6-acetyllysine; alternate. N6-succinyllysine; alternate is present on Lys239. Lys305 bears the N6-acetyllysine mark. The active-site Proton acceptor is His372. Lys418 is subject to N6-acetyllysine; alternate. An N6-succinyllysine; alternate modification is found at Lys418. 2 positions are modified to N6-succinyllysine: Lys424 and Lys439. Residue 452 to 464 (GKEFLKKKKLSPD) participates in CoA binding. Residues Tyr486, Ser488, and Thr499 each contribute to the (R)-carnitine site. N6-acetyllysine; alternate is present on residues Lys510 and Lys544. Lys510 and Lys544 each carry N6-succinyllysine; alternate.

The protein belongs to the carnitine/choline acetyltransferase family.

The protein resides in the mitochondrion inner membrane. It catalyses the reaction (R)-carnitine + hexadecanoyl-CoA = O-hexadecanoyl-(R)-carnitine + CoA. The enzyme catalyses octanoyl-CoA + (R)-carnitine = O-octanoyl-(R)-carnitine + CoA. The catalysed reaction is decanoyl-CoA + (R)-carnitine = O-decanoyl-(R)-carnitine + CoA. It carries out the reaction dodecanoyl-CoA + (R)-carnitine = O-dodecanoyl-R-carnitine + CoA. It catalyses the reaction tetradecanoyl-CoA + (R)-carnitine = O-tetradecanoyl-(R)-carnitine + CoA. The enzyme catalyses (R)-carnitine + octadecanoyl-CoA = O-octadecanoyl-(R)-carnitine + CoA. The catalysed reaction is eicosanoyl-CoA + (R)-carnitine = O-eicosanoyl-(R)-carnitine + CoA. It carries out the reaction (9Z)-tetradecenoyl-CoA + (R)-carnitine = O-(9Z)-tetradecenoyl-(R)-carnitine + CoA. It catalyses the reaction (5Z)-tetradecenoyl-CoA + (R)-carnitine = O-(5Z)-tetradecenoyl-(R)-carnitine + CoA. The enzyme catalyses (R)-carnitine + (9Z)-octadecenoyl-CoA = O-(9Z)-octadecenoyl-(R)-carnitine + CoA. The catalysed reaction is 4,8-dimethylnonanoyl-CoA + (R)-carnitine = O-4,8-dimethylnonanoyl-(R)-carnitine + CoA. It functions in the pathway lipid metabolism; fatty acid beta-oxidation. Its function is as follows. Involved in the intramitochondrial synthesis of acylcarnitines from accumulated acyl-CoA metabolites. Reconverts acylcarnitines back into the respective acyl-CoA esters that can then undergo beta-oxidation, an essential step for the mitochondrial uptake of long-chain fatty acids and their subsequent beta-oxidation in the mitochondrion. Active with medium (C8-C12) and long-chain (C14-C18) acyl-CoA esters. The protein is Carnitine O-palmitoyltransferase 2, mitochondrial of Mus musculus (Mouse).